The primary structure comprises 439 residues: Glutamyl-tRNA(Gln) amidotransferase subunit D (439 aa).

The 332-residue stretch at 88–419 folds into the Asparaginase/glutaminase domain; the sequence is GKVKIISTGG…EEVKRIMLTN (332 aa). Residues Thr-98, Thr-174, Asp-175, and Lys-253 contribute to the active site.

It belongs to the asparaginase 1 family. GatD subfamily. As to quaternary structure, heterodimer of GatD and GatE.

It catalyses the reaction L-glutamyl-tRNA(Gln) + L-glutamine + ATP + H2O = L-glutaminyl-tRNA(Gln) + L-glutamate + ADP + phosphate + H(+). In terms of biological role, allows the formation of correctly charged Gln-tRNA(Gln) through the transamidation of misacylated Glu-tRNA(Gln) in organisms which lack glutaminyl-tRNA synthetase. The reaction takes place in the presence of glutamine and ATP through an activated gamma-phospho-Glu-tRNA(Gln). The GatDE system is specific for glutamate and does not act on aspartate. The protein is Glutamyl-tRNA(Gln) amidotransferase subunit D of Metallosphaera sedula (strain ATCC 51363 / DSM 5348 / JCM 9185 / NBRC 15509 / TH2).